The following is an 85-amino-acid chain: uncharacterized protein (85 aa).

The next 3 helical transmembrane spans lie at 4-24, 27-47, and 61-81; these read LTLCWLALLALAVTGVLLGGA, SPWLLAAVLACAVAKGWLIGE, and RLLLAWPLLMALAVGAALYLA.

It is found in the cell membrane. This is an uncharacterized protein from Pseudomonas aeruginosa (strain ATCC 15692 / DSM 22644 / CIP 104116 / JCM 14847 / LMG 12228 / 1C / PRS 101 / PAO1).